We begin with the raw amino-acid sequence, 327 residues long: Phenylalanine--tRNA ligase alpha subunit (327 aa).

Glu252 is a binding site for Mg(2+).

This sequence belongs to the class-II aminoacyl-tRNA synthetase family. Phe-tRNA synthetase alpha subunit type 1 subfamily. In terms of assembly, tetramer of two alpha and two beta subunits. Requires Mg(2+) as cofactor.

The protein resides in the cytoplasm. The enzyme catalyses tRNA(Phe) + L-phenylalanine + ATP = L-phenylalanyl-tRNA(Phe) + AMP + diphosphate + H(+). This chain is Phenylalanine--tRNA ligase alpha subunit, found in Shewanella putrefaciens (strain CN-32 / ATCC BAA-453).